A 420-amino-acid chain; its full sequence is Probable glucuronosyltransferase Os04g0398600 (420 aa).

Residues 1 to 4 (MGSR) are Cytoplasmic-facing. The chain crosses the membrane as a helical; Signal-anchor for type II membrane protein span at residues 5-25 (TVGWWLLAAAVVLAAAAADSG). Residues 26-420 (EAERAAEQHS…AGPVGDLKAW (395 aa)) lie on the Lumenal side of the membrane. Residues Asn147 and Asn408 are each glycosylated (N-linked (GlcNAc...) asparagine).

The protein belongs to the glycosyltransferase 47 family.

It is found in the golgi apparatus membrane. In terms of biological role, involved in the synthesis of glucuronoxylan hemicellulose in secondary cell walls. This is Probable glucuronosyltransferase Os04g0398600 from Oryza sativa subsp. japonica (Rice).